A 315-amino-acid chain; its full sequence is Lipoyl synthase (315 aa).

[4Fe-4S] cluster-binding residues include C62, C67, C73, C88, C92, C95, and S302. Residues 74–291 form the Radical SAM core domain; the sequence is FGKGTATFMI…ETEALRMGFR (218 aa).

It belongs to the radical SAM superfamily. Lipoyl synthase family. The cofactor is [4Fe-4S] cluster.

The protein localises to the cytoplasm. The catalysed reaction is [[Fe-S] cluster scaffold protein carrying a second [4Fe-4S](2+) cluster] + N(6)-octanoyl-L-lysyl-[protein] + 2 oxidized [2Fe-2S]-[ferredoxin] + 2 S-adenosyl-L-methionine + 4 H(+) = [[Fe-S] cluster scaffold protein] + N(6)-[(R)-dihydrolipoyl]-L-lysyl-[protein] + 4 Fe(3+) + 2 hydrogen sulfide + 2 5'-deoxyadenosine + 2 L-methionine + 2 reduced [2Fe-2S]-[ferredoxin]. It participates in protein modification; protein lipoylation via endogenous pathway; protein N(6)-(lipoyl)lysine from octanoyl-[acyl-carrier-protein]: step 2/2. Catalyzes the radical-mediated insertion of two sulfur atoms into the C-6 and C-8 positions of the octanoyl moiety bound to the lipoyl domains of lipoate-dependent enzymes, thereby converting the octanoylated domains into lipoylated derivatives. The sequence is that of Lipoyl synthase from Azoarcus sp. (strain BH72).